The sequence spans 865 residues: SWI/SNF chromatin-remodeling complex subunit sol1 (865 aa).

4 disordered regions span residues Met-1 to Tyr-34, Met-54 to Gly-92, Gln-116 to Glu-143, and Val-163 to Leu-183. Residues Ser-17–Glu-30 show a composition bias toward polar residues. The segment covering Ala-121–Met-139 has biased composition (low complexity). The ARID domain occupies Ala-188–Leu-278. The interval Gln-288–Asp-380 is disordered. Residues His-328–Arg-353 are compositionally biased toward polar residues. A compositionally biased stretch (pro residues) spans Pro-356–Pro-368. Ser-852 and Ser-855 each carry phosphoserine.

The protein belongs to the SWI1 family. Component of the SWI/SNF global transcription activator complex composed of at least arp9, arp42, snf5, snf22, snf30, sbf59, sol1, ssr1, ssr2, ssr3, ssr4 and tfg3.

It localises to the nucleus. Its function is as follows. Component of the SWI/SNF complex, an ATP-dependent chromatin remodeling complex, required for the positive and negative regulation of gene expression of a large number of genes. It changes chromatin structure by altering DNA-histone contacts within a nucleosome, leading eventually to a change in nucleosome position, thus facilitating or repressing binding of gene-specific transcription factors. This is SWI/SNF chromatin-remodeling complex subunit sol1 (sol1) from Schizosaccharomyces pombe (strain 972 / ATCC 24843) (Fission yeast).